Here is a 339-residue protein sequence, read N- to C-terminus: Protein H339R (339 aa).

This sequence belongs to the asfivirus H339R family. In terms of assembly, interacts with NACA (alpha chain of nascent polypeptide-associated complex).

It localises to the host cytoplasm. It is found in the host nucleus. The protein resides in the virion. This is Protein H339R from African swine fever virus (isolate Warthog/Namibia/Wart80/1980) (ASFV).